The sequence spans 311 residues: Malate dehydrogenase (311 aa).

Residues Gly-7–Gly-13 and Asp-34 contribute to the NAD(+) site. Substrate contacts are provided by Arg-81 and Arg-87. NAD(+) is bound by residues Asn-94 and Ile-117 to Asn-119. Asn-119 and Arg-153 together coordinate substrate. His-177 acts as the Proton acceptor in catalysis. Met-227 is an NAD(+) binding site.

The protein belongs to the LDH/MDH superfamily. MDH type 1 family. As to quaternary structure, homodimer.

It carries out the reaction (S)-malate + NAD(+) = oxaloacetate + NADH + H(+). In terms of biological role, catalyzes the reversible oxidation of malate to oxaloacetate. In Shewanella pealeana (strain ATCC 700345 / ANG-SQ1), this protein is Malate dehydrogenase.